A 410-amino-acid chain; its full sequence is Argininosuccinate synthase (410 aa).

Residues 10–18 and A37 contribute to the ATP site; that span reads AYSGGLDTS. L-citrulline contacts are provided by Y90 and S95. Residue G120 participates in ATP binding. Positions 122, 126, and 127 each coordinate L-aspartate. N126 is a binding site for L-citrulline. 5 residues coordinate L-citrulline: R130, S182, S191, E267, and Y279.

This sequence belongs to the argininosuccinate synthase family. Type 1 subfamily. As to quaternary structure, homotetramer.

The protein resides in the cytoplasm. It catalyses the reaction L-citrulline + L-aspartate + ATP = 2-(N(omega)-L-arginino)succinate + AMP + diphosphate + H(+). It functions in the pathway amino-acid biosynthesis; L-arginine biosynthesis; L-arginine from L-ornithine and carbamoyl phosphate: step 2/3. This is Argininosuccinate synthase from Polynucleobacter asymbioticus (strain DSM 18221 / CIP 109841 / QLW-P1DMWA-1) (Polynucleobacter necessarius subsp. asymbioticus).